The primary structure comprises 519 residues: Lysine histidine transporter-like 8 (519 aa).

Positions 1 to 44 (MDERPETELISIPATPRVSTPEILTPSGQRSPRPATKPSSATWT) are disordered. The Cytoplasmic portion of the chain corresponds to 1–114 (MDERPETELI…NLNAGVGFQA (114 aa)). A run of 2 helical transmembrane segments spans residues 115–135 (LVLP…SLTI) and 136–156 (AYCW…AVPG). Topologically, residues 157 to 176 (KRYNRYVELAQAAFGERLGV) are cytoplasmic. Residues 177–197 (WLALFPTVYLSAGTATALILI) traverse the membrane as a helical segment. Over 198–217 (GGETMKLFFQIVCGPLCTSN) the chain is Extracellular. Residues 218 to 238 (PLTTVEWYLVFTSLCIVLSQL) traverse the membrane as a helical segment. The Cytoplasmic segment spans residues 239–243 (PNLNS). A helical transmembrane segment spans residues 244–264 (IAGLSLIGAVTAITYSTMVWV). The Extracellular portion of the chain corresponds to 265-282 (LSVSQPRPATISYEPLSM). A helical transmembrane segment spans residues 283 to 303 (PSTSGSLFAVLNALGIIAFAF). Over 304–333 (RGHNLVLEIQSTMPSTFKHPAHVPMWRGAK) the chain is Cytoplasmic. A helical transmembrane segment spans residues 334-354 (ISYFLIALCIFPISIGGFWAY). Residues 355 to 377 (GNLMPSGGMLAALYAFHIHDIPR) are Extracellular-facing. Residues 378–398 (GLLATAFLLVVFSCLSSFQIY) traverse the membrane as a helical segment. The Cytoplasmic segment spans residues 399–427 (SMPAFDSFEAGYTSRTNKPCSIWVRSGFR). The chain crosses the membrane as a helical span at residues 428 to 448 (VFFGFVSFFIGVALPFLSSLA). A topological domain (extracellular) is located at residue G449. The helical transmembrane segment at 450 to 470 (LLGGLTLPVTFAYPCFMWVLI) threads the bilayer. At 471 to 485 (KKPAKYSFNWYFHWG) the chain is on the cytoplasmic side. The helical transmembrane segment at 486 to 506 (LGWLGVAFSLAFSIGGIWSMV) threads the bilayer. Residues 507-519 (TNGLKLKFFKPPN) lie on the Extracellular side of the membrane.

It belongs to the amino acid/polyamine transporter 2 family. Amino acid/auxin permease (AAAP) (TC 2.A.18.2) subfamily.

It localises to the cell membrane. Amino acid transporter. In Arabidopsis thaliana (Mouse-ear cress), this protein is Lysine histidine transporter-like 8 (AATL1).